Consider the following 291-residue polypeptide: Shikimate dehydrogenase (NADP(+)) (291 aa).

Shikimate contacts are provided by residues 23-25 (SFS) and threonine 70. Residue lysine 74 is the Proton acceptor of the active site. Residues asparagine 95 and aspartate 110 each coordinate shikimate. Residues 135 to 139 (GAGGA) and leucine 232 contribute to the NADP(+) site. Shikimate is bound at residue tyrosine 234. Glycine 255 serves as a coordination point for NADP(+).

It belongs to the shikimate dehydrogenase family. As to quaternary structure, homodimer.

The catalysed reaction is shikimate + NADP(+) = 3-dehydroshikimate + NADPH + H(+). The protein operates within metabolic intermediate biosynthesis; chorismate biosynthesis; chorismate from D-erythrose 4-phosphate and phosphoenolpyruvate: step 4/7. Functionally, involved in the biosynthesis of the chorismate, which leads to the biosynthesis of aromatic amino acids. Catalyzes the reversible NADPH linked reduction of 3-dehydroshikimate (DHSA) to yield shikimate (SA). The chain is Shikimate dehydrogenase (NADP(+)) from Desulforamulus reducens (strain ATCC BAA-1160 / DSM 100696 / MI-1) (Desulfotomaculum reducens).